The sequence spans 433 residues: CinA-like protein (433 aa).

This sequence belongs to the CinA family.

The sequence is that of CinA-like protein from Prochlorococcus marinus (strain MIT 9515).